The chain runs to 218 residues: Small ribosomal subunit protein uS7 (218 aa).

This sequence belongs to the universal ribosomal protein uS7 family. As to quaternary structure, part of the 30S ribosomal subunit.

In terms of biological role, one of the primary rRNA binding proteins, it binds directly to 16S rRNA where it nucleates assembly of the head domain of the 30S subunit. Is located at the subunit interface close to the decoding center. This is Small ribosomal subunit protein uS7 (rps7) from Pyrococcus horikoshii (strain ATCC 700860 / DSM 12428 / JCM 9974 / NBRC 100139 / OT-3).